The primary structure comprises 236 residues: 27 kDa hemolymph protein (236 aa).

The first 17 residues, 1–17, serve as a signal peptide directing secretion; that stretch reads MMWKLIIVTILAVGVLC.

Monomer. As to expression, hemolymph.

It is found in the secreted. The chain is 27 kDa hemolymph protein from Galleria mellonella (Greater wax moth).